Here is an 81-residue protein sequence, read N- to C-terminus: Photosystem I iron-sulfur center (81 aa).

4Fe-4S ferredoxin-type domains are found at residues 2–31 (SHAV…MVPW) and 37–68 (GQIA…IRVY). Positions 11, 14, 17, 21, 48, 51, 54, and 58 each coordinate [4Fe-4S] cluster.

In terms of assembly, the cyanobacterial PSI reaction center is composed of one copy each of PsaA,B,C,D,E,F,I,J,K,L,M and X, and forms trimeric complexes. The cofactor is [4Fe-4S] cluster.

It localises to the cellular thylakoid membrane. It carries out the reaction reduced [plastocyanin] + hnu + oxidized [2Fe-2S]-[ferredoxin] = oxidized [plastocyanin] + reduced [2Fe-2S]-[ferredoxin]. Apoprotein for the two 4Fe-4S centers FA and FB of photosystem I (PSI); essential for photochemical activity. FB is the terminal electron acceptor of PSI, donating electrons to ferredoxin. The C-terminus interacts with PsaA/B/D and helps assemble the protein into the PSI complex. Required for binding of PsaD and PsaE to PSI. PSI is a plastocyanin/cytochrome c6-ferredoxin oxidoreductase, converting photonic excitation into a charge separation, which transfers an electron from the donor P700 chlorophyll pair to the spectroscopically characterized acceptors A0, A1, FX, FA and FB in turn. The polypeptide is Photosystem I iron-sulfur center (Prochlorococcus marinus subsp. pastoris (strain CCMP1986 / NIES-2087 / MED4)).